Consider the following 395-residue polypeptide: Chaperone protein DnaJ (395 aa).

Residues 5 to 70 form the J domain; that stretch reads DFYEVLGVDK…NKRAAYDRMG (66 aa). The CR-type zinc-finger motif lies at 145–223; sequence GKDETIKVPT…CDGVGRVRKT (79 aa). Zn(2+) contacts are provided by Cys-158, Cys-161, Cys-175, Cys-178, Cys-197, Cys-200, Cys-211, and Cys-214. CXXCXGXG motif repeat units follow at residues 158–165, 175–182, 197–204, and 211–218; these read CERCDGQG, CGTCQGAG, CPQCGGRG, and CNDCDGVG.

This sequence belongs to the DnaJ family. Homodimer. Requires Zn(2+) as cofactor.

It is found in the cytoplasm. Its function is as follows. Participates actively in the response to hyperosmotic and heat shock by preventing the aggregation of stress-denatured proteins and by disaggregating proteins, also in an autonomous, DnaK-independent fashion. Unfolded proteins bind initially to DnaJ; upon interaction with the DnaJ-bound protein, DnaK hydrolyzes its bound ATP, resulting in the formation of a stable complex. GrpE releases ADP from DnaK; ATP binding to DnaK triggers the release of the substrate protein, thus completing the reaction cycle. Several rounds of ATP-dependent interactions between DnaJ, DnaK and GrpE are required for fully efficient folding. Also involved, together with DnaK and GrpE, in the DNA replication of plasmids through activation of initiation proteins. In Maricaulis maris (strain MCS10) (Caulobacter maris), this protein is Chaperone protein DnaJ.